Reading from the N-terminus, the 310-residue chain is Membrane protein insertase YidC 2 (310 aa).

Residues 1-23 (MKKIYKRLLFSGLALSMLFFLSG) form the signal peptide. Residue C24 is the site of N-palmitoyl cysteine attachment. A lipid anchor (S-diacylglycerol cysteine) is attached at C24. 5 helical membrane-spanning segments follow: residues 34–54 (GEGWVYKFFAAPMGSVIQYLA), 57–77 (LGLGFGFAIIIVTVIVRLLIL), 136–156 (FGGLGCLPLLIQMPFFSALYI), 180–200 (IITVIIGILYLVQSWVSTLSV), and 220–240 (VMISIGAPAGGALYWLVSGIF). Positions 263–310 (EFKKNPPKPFKSNARKDITPQANNDKKLITSKKQKSNRNAGKQRHHKQ) are disordered. Basic and acidic residues predominate over residues 276–290 (ARKDITPQANNDKKL). Residues 291-310 (ITSKKQKSNRNAGKQRHHKQ) are compositionally biased toward basic residues.

This sequence belongs to the OXA1/ALB3/YidC family. Type 2 subfamily.

It is found in the cell membrane. Required for the insertion and/or proper folding and/or complex formation of integral membrane proteins into the membrane. Involved in integration of membrane proteins that insert both dependently and independently of the Sec translocase complex, as well as at least some lipoproteins. Partially complements an E.coli yidC depletion experiment. The polypeptide is Membrane protein insertase YidC 2 (yidC2) (Streptococcus mutans serotype c (strain ATCC 700610 / UA159)).